Here is a 681-residue protein sequence, read N- to C-terminus: Methionine--tRNA ligase (681 aa).

Positions 14–24 match the 'HIGH' region motif; that stretch reads PYANGSIHLGH. Positions 145, 148, 158, and 161 each coordinate Zn(2+). Residues 331-335 carry the 'KMSKS' region motif; sequence KMSKS. ATP is bound at residue lysine 334. Positions 579 to 681 constitute a tRNA-binding domain; it reads TFAAVDLRVA…SGAKPGQRIK (103 aa).

Belongs to the class-I aminoacyl-tRNA synthetase family. MetG type 1 subfamily. Homodimer. It depends on Zn(2+) as a cofactor.

The protein localises to the cytoplasm. It carries out the reaction tRNA(Met) + L-methionine + ATP = L-methionyl-tRNA(Met) + AMP + diphosphate. Is required not only for elongation of protein synthesis but also for the initiation of all mRNA translation through initiator tRNA(fMet) aminoacylation. The sequence is that of Methionine--tRNA ligase from Pseudomonas putida (strain W619).